The following is a 252-amino-acid chain: Trans-aconitate 2-methyltransferase (252 aa).

Belongs to the methyltransferase superfamily. Tam family.

The protein resides in the cytoplasm. It carries out the reaction trans-aconitate + S-adenosyl-L-methionine = (E)-3-(methoxycarbonyl)pent-2-enedioate + S-adenosyl-L-homocysteine. Its function is as follows. Catalyzes the S-adenosylmethionine monomethyl esterification of trans-aconitate. In Escherichia coli O7:K1 (strain IAI39 / ExPEC), this protein is Trans-aconitate 2-methyltransferase.